Reading from the N-terminus, the 249-residue chain is Probable septum site-determining protein MinC (249 aa).

The tract at residues 117–138 is disordered; sequence AVRPPQPPPPPHARAEPAAPVA.

It belongs to the MinC family. As to quaternary structure, interacts with MinD and FtsZ.

In terms of biological role, cell division inhibitor that blocks the formation of polar Z ring septums. Rapidly oscillates between the poles of the cell to destabilize FtsZ filaments that have formed before they mature into polar Z rings. Prevents FtsZ polymerization. This Xanthomonas campestris pv. campestris (strain 8004) protein is Probable septum site-determining protein MinC.